Reading from the N-terminus, the 192-residue chain is Leucine-rich repeat-containing protein 51 (192 aa).

3 LRR repeats span residues 50–71 (MTQSLWLNNNVLTDLRDFNHAV), 80–101 (NLAWIDLSFNDLTSIDPVLTTF), and 103–124 (NLSVLYLHGNSIQRLGEVNKLA). The region spanning 137 to 175 (NPIEEEKGYRQYVLCTLPHITTFDFSGVTKADRTTAEVW) is the LRRCT domain.

Its subcellular location is the cytoplasm. The chain is Leucine-rich repeat-containing protein 51 from Bos taurus (Bovine).